The following is a 321-amino-acid chain: Lipoyl synthase (321 aa).

The [4Fe-4S] cluster site is built by cysteine 68, cysteine 73, cysteine 79, cysteine 94, cysteine 98, cysteine 101, and serine 308. A Radical SAM core domain is found at 80–297 (FNHGTATFMI…KALADELGFT (218 aa)).

This sequence belongs to the radical SAM superfamily. Lipoyl synthase family. The cofactor is [4Fe-4S] cluster.

Its subcellular location is the cytoplasm. It carries out the reaction [[Fe-S] cluster scaffold protein carrying a second [4Fe-4S](2+) cluster] + N(6)-octanoyl-L-lysyl-[protein] + 2 oxidized [2Fe-2S]-[ferredoxin] + 2 S-adenosyl-L-methionine + 4 H(+) = [[Fe-S] cluster scaffold protein] + N(6)-[(R)-dihydrolipoyl]-L-lysyl-[protein] + 4 Fe(3+) + 2 hydrogen sulfide + 2 5'-deoxyadenosine + 2 L-methionine + 2 reduced [2Fe-2S]-[ferredoxin]. It functions in the pathway protein modification; protein lipoylation via endogenous pathway; protein N(6)-(lipoyl)lysine from octanoyl-[acyl-carrier-protein]: step 2/2. Functionally, catalyzes the radical-mediated insertion of two sulfur atoms into the C-6 and C-8 positions of the octanoyl moiety bound to the lipoyl domains of lipoate-dependent enzymes, thereby converting the octanoylated domains into lipoylated derivatives. The polypeptide is Lipoyl synthase (Shewanella baltica (strain OS185)).